The following is a 281-amino-acid chain: Beta-lactamase (281 aa).

The first 24 residues, 1–24 (MKKLIFLIVIALVLSACNSNSSHA), serve as a signal peptide directing secretion. Catalysis depends on serine 63, which acts as the Acyl-ester intermediate. 225–227 (KSG) serves as a coordination point for substrate.

The protein belongs to the class-A beta-lactamase family.

It catalyses the reaction a beta-lactam + H2O = a substituted beta-amino acid. This Staphylococcus aureus protein is Beta-lactamase (blaZ).